We begin with the raw amino-acid sequence, 1174 residues long: Fanconi anemia group J protein homolog (1174 aa).

One can recognise a Helicase ATP-binding domain in the interval 11 to 445 (GGVKIHFPCR…KSHEPLRDVC (435 aa)). Positions 101-126 (NLDTSPHFNSPSKPSSGRNGVSTPCQ) are enriched in polar residues. Disordered regions lie at residues 101–160 (NLDT…EKKR) and 187–208 (LASE…DRKD). The segment covering 134–143 (LAAKLSAKKQ) has biased composition (low complexity). Positions 158-175 (KKRIRPLETTQQIRKRHC) match the Nuclear localization signal motif. 185–192 (ARLASEKR) is an ATP binding site. Residues Cys286, Cys301, Cys313, and Cys353 each contribute to the [4Fe-4S] cluster site. Positions 393–396 (VILD) match the DEAH box motif. The interaction with BRCA1 stretch occupies residues 888 to 1063 (SRRHQKVTNR…SNETADTSLG (176 aa)). Polar residues-rich tracts occupy residues 923–935 (TSVS…SPEN) and 990–1001 (SRSSSPTFGKQT). 2 disordered regions span residues 923–1001 (TSVS…GKQT) and 1102–1155 (LSPG…SSHS). Phosphoserine occurs at positions 929, 932, and 994. Positions 1138–1147 (DTNEENGELV) are enriched in acidic residues. Position 1174 is an N6-acetyllysine (Lys1174).

The protein belongs to the DEAD box helicase family. DEAH subfamily. Binds directly to the BRCT domains of BRCA1. Interacts with the CIA complex components CIAO1, CIAO2B and MMS19. It depends on [4Fe-4S] cluster as a cofactor. In terms of processing, phosphorylated. Phosphorylation is necessary for interaction with BRCA1, and is cell-cycle regulated.

It is found in the nucleus. The protein resides in the cytoplasm. It catalyses the reaction Couples ATP hydrolysis with the unwinding of duplex DNA at the replication fork by translocating in the 5'-3' direction. This creates two antiparallel DNA single strands (ssDNA). The leading ssDNA polymer is the template for DNA polymerase III holoenzyme which synthesizes a continuous strand.. It carries out the reaction ATP + H2O = ADP + phosphate + H(+). DNA-dependent helicase and 5' to 3' DNA helicase required for the maintenance of chromosomal stability. Acts late in the Fanconi anemia pathway, after FANCD2 ubiquitination. Involved in the repair of DNA double-strand breaks by homologous recombination in a manner that depends on its association with BRCA1. Involved in the repair of abasic sites at replication forks by promoting the degradation of DNA-protein cross-links: acts by catalyzing unfolding of HMCES DNA-protein cross-link via its helicase activity, exposing the underlying DNA and enabling cleavage of the DNA-protein adduct by the SPRTN metalloprotease. Can unwind RNA:DNA hybrids and G-quadruplex DNA. The protein is Fanconi anemia group J protein homolog of Mus musculus (Mouse).